A 389-amino-acid chain; its full sequence is MFSLRSWRYTALAGDEDDLEGIDKKAFLASPLRSSSLRQRNQPKQLLLLLLRTIIVVSVITFAAIIGCWVFLSHGTTTTNPPQQCSTPAVRKEWRSLSPSAQAKYISAVQCLMYLPSVHKEGTTLYDDFVFGHSKTGSYSHYAASFLPWHRMYLHVYERALRDHCGYSESLPYWDWTLDSHHLSASPIWDPVTGFGGDGNPGGAETLHGGRCVVDGPFANSTRAWRALSEGHNHDVEYGPHCLSRGFIINNDDRTTLEMLHGLVSPSRVAQTLDKPDYIAFFEDFESGPHNAIPQFIRGDFLTFSAPNDPVFYLHHANVDRLWWLWQQRDPAGRLYQVRGPAKDFRYHEGHEVSEGSIEDVMPMGGLAEDIKMKSVMDTRAGFLCYEYE.

Residues 53–73 (TIIVVSVITFAAIIGCWVFLS) traverse the membrane as a helical segment. 2 residues coordinate Cu cation: His-141 and His-150. A glycan (N-linked (GlcNAc...) asparagine) is linked at Asn-220. Residues His-290 and His-316 each coordinate Cu cation.

The protein belongs to the tyrosinase family. Cu(2+) is required as a cofactor.

It localises to the membrane. Its pathway is mycotoxin biosynthesis. Functionally, tyrosinase-like protein; part of the gene cluster that mediates the biosynthesis of the phomopsins, a group of hexapeptide mycotoxins which infects lupins and causes lupinosis disease in livestock. Within the pathway, phomQ1 functions as a halogenase, converting. The pathway starts with the processing of the precursor phomA by several endopeptidases including kexin proteases as well as the cluster-specific S41 family peptidase phomP1 and the oligopeptidase phomG to produce 10 identical copies of the hexapeptide Tyr-Val-Ile-Pro-Ile-Asp. After being excised from the precursor peptide, the core peptides are cyclized and modified post-translationally by enzymes encoded within the gene cluster. The timing and order of proteolysis of the phomA precursor and PTMs are still unknown. Two tyrosinase-like enzymes, phomQ1 and phomQ2, catalyze the chlorination and hydroxylation of Tyr, respectively. PhomYb, is proposed to be involved in the construction of the macrocyclic structure. The other 4 ustYa family proteins may be involved in PTMs that generate the unique structure of phomopsin A. PhomYa is required for the hydroxylation of C-beta of Tyr. PhomYc, phomYd, and phomYe are responsible for the biosynthesis of 2,3-dehydroisoleucine (dIle), 2,3-dehydroaspartic acid (dAsp), and 3,4-dehydroproline (dPro), respectively. While dIle formation by phomYc is indispensable for the installation of dAsp by phomYd, the order of the other PTMs have not been elucidated yet. Most of the biosynthetic enzymes likely have broad substrate specificity, and thus, there might be a metabolic grid from a precursor to phomopsin A. The enzyme(s) responsible for the biosynthesis of 3,4-dehydrovaline (dVal) have also not been identified yet. Finally, phomM acts as an S-adenosylmethionine-dependent alpha-N-methyltransferase that catalyzes two successive N-methylation reactions, converting N-desmethyl-phomopsin A to phomopsin A and phomopsin A further to an N,N-dimethylated congener called phomopsin E. The polypeptide is Tyrosinase-like protein phomQ1 (Diaporthe leptostromiformis (Lupinosis disease fungus)).